The following is a 444-amino-acid chain: Exodeoxyribonuclease 7 large subunit (444 aa).

The protein belongs to the XseA family. As to quaternary structure, heterooligomer composed of large and small subunits.

The protein resides in the cytoplasm. It carries out the reaction Exonucleolytic cleavage in either 5'- to 3'- or 3'- to 5'-direction to yield nucleoside 5'-phosphates.. Functionally, bidirectionally degrades single-stranded DNA into large acid-insoluble oligonucleotides, which are then degraded further into small acid-soluble oligonucleotides. The chain is Exodeoxyribonuclease 7 large subunit from Rickettsia canadensis (strain McKiel).